Reading from the N-terminus, the 132-residue chain is Large ribosomal subunit protein uL24 (132 aa).

This sequence belongs to the universal ribosomal protein uL24 family. In terms of assembly, part of the 50S ribosomal subunit.

One of two assembly initiator proteins, it binds directly to the 5'-end of the 23S rRNA, where it nucleates assembly of the 50S subunit. Functionally, one of the proteins that surrounds the polypeptide exit tunnel on the outside of the subunit. This is Large ribosomal subunit protein uL24 from Synechococcus sp. (strain JA-2-3B'a(2-13)) (Cyanobacteria bacterium Yellowstone B-Prime).